The following is a 356-amino-acid chain: Peptide chain release factor 1 (356 aa).

Gln-233 is modified (N5-methylglutamine).

This sequence belongs to the prokaryotic/mitochondrial release factor family. Post-translationally, methylated by PrmC. Methylation increases the termination efficiency of RF1.

It localises to the cytoplasm. Peptide chain release factor 1 directs the termination of translation in response to the peptide chain termination codons UAG and UAA. The polypeptide is Peptide chain release factor 1 (Syntrophotalea carbinolica (strain DSM 2380 / NBRC 103641 / GraBd1) (Pelobacter carbinolicus)).